A 158-amino-acid polypeptide reads, in one-letter code: Cyclic pyranopterin monophosphate synthase (158 aa).

Substrate contacts are provided by residues 75-77 and 113-114; these read LCH and ME. Aspartate 128 is a catalytic residue.

Belongs to the MoaC family. As to quaternary structure, homohexamer; trimer of dimers.

It carries out the reaction (8S)-3',8-cyclo-7,8-dihydroguanosine 5'-triphosphate = cyclic pyranopterin phosphate + diphosphate. It participates in cofactor biosynthesis; molybdopterin biosynthesis. Functionally, catalyzes the conversion of (8S)-3',8-cyclo-7,8-dihydroguanosine 5'-triphosphate to cyclic pyranopterin monophosphate (cPMP). This Actinobacillus pleuropneumoniae serotype 5b (strain L20) protein is Cyclic pyranopterin monophosphate synthase.